The primary structure comprises 437 residues: Phosphomethylpyrimidine synthase (437 aa).

Substrate contacts are provided by residues Asn-69, Met-98, Tyr-127, His-163, 185-187 (SRG), 226-229 (DACR), and Glu-265. His-269 provides a ligand contact to Zn(2+). Substrate is bound at residue Tyr-292. Residue His-333 participates in Zn(2+) binding. Positions 409, 412, and 416 each coordinate [4Fe-4S] cluster.

The protein belongs to the ThiC family. Requires [4Fe-4S] cluster as cofactor.

The enzyme catalyses 5-amino-1-(5-phospho-beta-D-ribosyl)imidazole + S-adenosyl-L-methionine = 4-amino-2-methyl-5-(phosphooxymethyl)pyrimidine + CO + 5'-deoxyadenosine + formate + L-methionine + 3 H(+). It participates in cofactor biosynthesis; thiamine diphosphate biosynthesis. Catalyzes the synthesis of the hydroxymethylpyrimidine phosphate (HMP-P) moiety of thiamine from aminoimidazole ribotide (AIR) in a radical S-adenosyl-L-methionine (SAM)-dependent reaction. This is Phosphomethylpyrimidine synthase from Clostridium botulinum (strain Kyoto / Type A2).